The primary structure comprises 388 residues: Na(+)/H(+) antiporter NhaA (388 aa).

At 1 to 11 the chain is on the cytoplasmic side; the sequence is MKHLHRFFSSD. The helical transmembrane segment at 12-31 threads the bilayer; that stretch reads ASGGIILIIAAILAMMMANS. Residues 32–58 lie on the Periplasmic side of the membrane; the sequence is GATSGWYHDFLETPVQLRVGSLEINKN. A helical membrane pass occupies residues 59–80; that stretch reads MLLWINDALMAVFFLLVGLEVK. Over 81-96 the chain is Cytoplasmic; the sequence is RELMQGSLASLRQAAF. Residues 97–116 traverse the membrane as a helical segment; that stretch reads PVIAAIGGMIVPALLYLAFN. The Periplasmic portion of the chain corresponds to 117–122; it reads YADPIT. The helical transmembrane segment at 123–130 threads the bilayer; the sequence is REGWAIPA. Residues 131-154 are Cytoplasmic-facing; that stretch reads ATDIAFALGVLALLGSRVPLALKI. A helical transmembrane segment spans residues 155 to 176; the sequence is FLMALAIIDDLGAIIIIALFYT. Over 177–180 the chain is Periplasmic; sequence NDLS. A helical transmembrane segment spans residues 181-200; it reads MASLGVAAVAIAVLAVLNLC. At 201 to 204 the chain is on the cytoplasmic side; it reads GVRR. Residues 205–222 form a helical membrane-spanning segment; sequence TGVYILVGVVLWTAVLKS. G223 is a topological domain (periplasmic). Residues 224 to 236 traverse the membrane as a helical segment; the sequence is VHATLAGVIVGFF. Topologically, residues 237–253 are cytoplasmic; it reads IPLKEKHGRSTAKRLEH. Residues 254 to 272 form a helical membrane-spanning segment; sequence VLHPWVAYLILPLFAFANA. The Periplasmic portion of the chain corresponds to 273–286; sequence GVSLQGVTLDGLTS. Residues 287–310 form a helical membrane-spanning segment; sequence ILPLGIIAGLLIGKPLGISLFCWL. The Cytoplasmic portion of the chain corresponds to 311–339; it reads ALRLKLAHLPEGTTYQQIMAVGILCGIGF. The chain crosses the membrane as a helical span at residues 340–350; that stretch reads TMSIFIASLAF. At 351–357 the chain is on the periplasmic side; that stretch reads GSVDPEL. Residues 358 to 380 form a helical membrane-spanning segment; it reads INWAKLGILVGSISSAVIGYSWL. Residues 381–388 are Cytoplasmic-facing; it reads RVRLRPSV.

It belongs to the NhaA Na(+)/H(+) (TC 2.A.33) antiporter family.

It localises to the cell inner membrane. The catalysed reaction is Na(+)(in) + 2 H(+)(out) = Na(+)(out) + 2 H(+)(in). Its function is as follows. Na(+)/H(+) antiporter that extrudes sodium in exchange for external protons. The sequence is that of Na(+)/H(+) antiporter NhaA from Shigella dysenteriae serotype 1 (strain Sd197).